An 80-amino-acid polypeptide reads, in one-letter code: Defensin-like protein 14 (80 aa).

The first 29 residues, 1-29, serve as a signal peptide directing secretion; the sequence is MAKSAAIITFLFAALVLFAAFEAPIMVEA. Pyrrolidone carboxylic acid is present on Q30. 4 disulfide bridges follow: C33–C80, C44–C65, C50–C74, and C54–C76.

This sequence belongs to the DEFL family.

It localises to the secreted. Confers broad-spectrum resistance to pathogens. Has antifungal activity in vitro. The chain is Defensin-like protein 14 (PDF1.3) from Arabidopsis thaliana (Mouse-ear cress).